The sequence spans 161 residues: Afimbrial adhesin AFA-I (161 aa).

Positions 1–21 (MKKLAIIGATSVMMMTGTAQA) are cleaved as a signal peptide.

It belongs to the Dr-adhesin family.

Its subcellular location is the fimbrium. Hemagglutinins of uropathogenic E.coli mediate adherence to the upper urinary tract. These adhesins bind to the Dr blood group antigen and also agglutinate human erythrocytes in the presence of D-mannose (mannose-resistant hemagglutination (MRHA)). The protein is Afimbrial adhesin AFA-I (afaE1) of Escherichia coli.